The chain runs to 956 residues: Probable hypoxanthine oxidase XdhD (956 aa).

Residues Gln414, Phe445, and Ala727 each contribute to the Mo-molybdopterin site.

This sequence belongs to the xanthine dehydrogenase family. [2Fe-2S] cluster serves as cofactor. Requires Mo-molybdopterin as cofactor.

Its function is as follows. Probably has no xanthine dehydrogenase activity; however deletion results in increased adenine sensitivity, suggesting that this protein contributes to the conversion of adenine to guanine nucleotides during purine salvage. The chain is Probable hypoxanthine oxidase XdhD (xdhD) from Escherichia coli (strain K12).